The chain runs to 391 residues: MRYFVSPFNKEAELKFPDRITIYDTTLRDGEQTPGVCLGTEEKLEIARKLDELGIHQIESGFPVVSEQERVSVKSIANEGLNAEILALCRTKKDDIDAAIDCDVDGVITFMATSDLHLKHKLKLTREEALNVCMNSIEYAKDHGLFLAFSAEDATRTDLDFLKQIYRKAENYGADRVHIADTVGAISPQGMDYLVRELRRDIKVDIALHCHNDFGMALSNSIAGLLAGGTAVSTTVNGIGERAGNTSLEELIMALRIIYEVDLGFNIGVLYELSRLVEKHTRMKVPENKPIVGRNVFRHESGIHVDAVIEEPLTYEPFLPEMIGHQRKIVLGKHSGCRAVKAKLEEYGIDVTRDELCRIVEEVKKNREKGKYINDELFYRIVKSVRGPVDF.

Residues 20–271 (ITIYDTTLRD…DLGFNIGVLY (252 aa)) form the Pyruvate carboxyltransferase domain.

The protein belongs to the alpha-IPM synthase/homocitrate synthase family.

The enzyme catalyses acetyl-CoA + 2-oxoglutarate + H2O = (2R)-homocitrate + CoA + H(+). It catalyses the reaction 2-oxoadipate + acetyl-CoA + H2O = (R)-dihomocitrate + CoA + H(+). It carries out the reaction 2-oxoheptanedioate + acetyl-CoA + H2O = (R)-trihomocitrate + CoA + H(+). It functions in the pathway organic acid metabolism; 2-oxosuberate biosynthesis. Functionally, catalyzes the condensation of alpha-ketoglutarate and acetyl-CoA to form (R)-homocitrate. Can also catalyze the condensation of alpha-ketoadipate with acetyl-CoA to form (R)-homo(2)citrate, and the condensation of alpha-ketopimelate with acetyl-CoA to form (R)-homo(3)citrate. These reactions are part of the biosynthesis pathway of coenzyme B and biotin. The protein is Homocitrate synthase AksA (aksA) of Methanothermobacter thermautotrophicus (strain ATCC 29096 / DSM 1053 / JCM 10044 / NBRC 100330 / Delta H) (Methanobacterium thermoautotrophicum).